A 360-amino-acid chain; its full sequence is Photosystem II protein D1 2 (360 aa).

3 helical membrane-spanning segments follow: residues 29–46 (YIGWFGVLMIPTLLTAVT), 118–133 (HYMIGCICYLGRQWEY), and 142–156 (WICVAYSAPLAATYS). Position 118 (His-118) interacts with chlorophyll a. Tyr-126 is a binding site for pheophytin a. Residues Asp-170 and Glu-189 each contribute to the [CaMn4O5] cluster site. Residues 197-218 (FHMFGVAGVLGGSLFAAMHGSL) traverse the membrane as a helical segment. Residue His-198 participates in chlorophyll a binding. A quinone contacts are provided by residues His-215 and 264–265 (SF). His-215 is a Fe cation binding site. A Fe cation-binding site is contributed by His-272. Residues 274-288 (FLGAWPVVCIWLTAM) form a helical membrane-spanning segment. [CaMn4O5] cluster-binding residues include His-332, Glu-333, Asp-342, and Ala-344. The propeptide occupies 345–360 (AGESAPVALTAPVING).

This sequence belongs to the reaction center PufL/M/PsbA/D family. In terms of assembly, PSII is composed of 1 copy each of membrane proteins PsbA, PsbB, PsbC, PsbD, PsbE, PsbF, PsbH, PsbI, PsbJ, PsbK, PsbL, PsbM, PsbT, PsbX, PsbY, PsbZ, Psb30/Ycf12, peripheral proteins PsbO, CyanoQ (PsbQ), PsbU, PsbV and a large number of cofactors. It forms dimeric complexes. It depends on The D1/D2 heterodimer binds P680, chlorophylls that are the primary electron donor of PSII, and subsequent electron acceptors. It shares a non-heme iron and each subunit binds pheophytin, quinone, additional chlorophylls, carotenoids and lipids. D1 provides most of the ligands for the Mn4-Ca-O5 cluster of the oxygen-evolving complex (OEC). There is also a Cl(-1) ion associated with D1 and D2, which is required for oxygen evolution. The PSII complex binds additional chlorophylls, carotenoids and specific lipids. as a cofactor. Tyr-161 forms a radical intermediate that is referred to as redox-active TyrZ, YZ or Y-Z. Post-translationally, C-terminally processed by CtpA; processing is essential to allow assembly of the oxygen-evolving complex and thus photosynthetic growth.

It is found in the cellular thylakoid membrane. It catalyses the reaction 2 a plastoquinone + 4 hnu + 2 H2O = 2 a plastoquinol + O2. Photosystem II (PSII) is a light-driven water:plastoquinone oxidoreductase that uses light energy to abstract electrons from H(2)O, generating O(2) and a proton gradient subsequently used for ATP formation. It consists of a core antenna complex that captures photons, and an electron transfer chain that converts photonic excitation into a charge separation. The D1/D2 (PsbA/PsbD) reaction center heterodimer binds P680, the primary electron donor of PSII as well as several subsequent electron acceptors. The sequence is that of Photosystem II protein D1 2 from Acaryochloris marina (strain MBIC 11017).